Consider the following 264-residue polypeptide: 3-methyl-2-oxobutanoate hydroxymethyltransferase (264 aa).

Positions 45 and 84 each coordinate Mg(2+). Residues 45-46, aspartate 84, and lysine 112 contribute to the 3-methyl-2-oxobutanoate site; that span reads DS. Glutamate 114 contributes to the Mg(2+) binding site. The active-site Proton acceptor is the glutamate 181.

This sequence belongs to the PanB family. Homodecamer; pentamer of dimers. It depends on Mg(2+) as a cofactor.

The protein localises to the cytoplasm. The catalysed reaction is 3-methyl-2-oxobutanoate + (6R)-5,10-methylene-5,6,7,8-tetrahydrofolate + H2O = 2-dehydropantoate + (6S)-5,6,7,8-tetrahydrofolate. It participates in cofactor biosynthesis; (R)-pantothenate biosynthesis; (R)-pantoate from 3-methyl-2-oxobutanoate: step 1/2. Functionally, catalyzes the reversible reaction in which hydroxymethyl group from 5,10-methylenetetrahydrofolate is transferred onto alpha-ketoisovalerate to form ketopantoate. The protein is 3-methyl-2-oxobutanoate hydroxymethyltransferase of Shewanella denitrificans (strain OS217 / ATCC BAA-1090 / DSM 15013).